We begin with the raw amino-acid sequence, 542 residues long: CTP synthase (542 aa).

Residues 1–264 (MKFIFITGGV…AKLIINKLKL (264 aa)) form an amidoligase domain region. Position 12 (S12) interacts with CTP. Position 12 (S12) interacts with UTP. 13 to 18 (SLGKGI) contacts ATP. Residue Y53 participates in L-glutamine binding. D70 lines the ATP pocket. Mg(2+) contacts are provided by D70 and E138. Residues 145–147 (DIE), 185–190 (KTKPTQ), and K221 contribute to the CTP site. UTP is bound by residues 185 to 190 (KTKPTQ) and K221. 237–239 (KDA) contributes to the ATP binding site. In terms of domain architecture, Glutamine amidotransferase type-1 spans 298-541 (YIMLKDAYTS…VKSALDKKLK (244 aa)). G359 provides a ligand contact to L-glutamine. C386 (nucleophile; for glutamine hydrolysis) is an active-site residue. Residues 387-390 (LGMQ), E410, and R467 each bind L-glutamine. Active-site residues include H514 and E516.

Belongs to the CTP synthase family. As to quaternary structure, homotetramer.

It carries out the reaction UTP + L-glutamine + ATP + H2O = CTP + L-glutamate + ADP + phosphate + 2 H(+). It catalyses the reaction L-glutamine + H2O = L-glutamate + NH4(+). The enzyme catalyses UTP + NH4(+) + ATP = CTP + ADP + phosphate + 2 H(+). Its pathway is pyrimidine metabolism; CTP biosynthesis via de novo pathway; CTP from UDP: step 2/2. With respect to regulation, allosterically activated by GTP, when glutamine is the substrate; GTP has no effect on the reaction when ammonia is the substrate. The allosteric effector GTP functions by stabilizing the protein conformation that binds the tetrahedral intermediate(s) formed during glutamine hydrolysis. Inhibited by the product CTP, via allosteric rather than competitive inhibition. Its function is as follows. Catalyzes the ATP-dependent amination of UTP to CTP with either L-glutamine or ammonia as the source of nitrogen. Regulates intracellular CTP levels through interactions with the four ribonucleotide triphosphates. This Methanococcus aeolicus (strain ATCC BAA-1280 / DSM 17508 / OCM 812 / Nankai-3) protein is CTP synthase.